The primary structure comprises 246 residues: Probable maleylacetoacetate isomerase 1 (246 aa).

The GST N-terminal domain maps to 32–116 (TKPILYSYWP…YLEETRPQPA (85 aa)). Residues 42–47 (SSCSWR), valine 88, 100–101 (DS), glutamine 140, and 144–146 (NVS) contribute to the glutathione site. In terms of domain architecture, GST C-terminal spans 121-241 (DPVKRAKIRE…HPSTQPDCPP (121 aa)).

This sequence belongs to the GST superfamily. Zeta family. The cofactor is glutathione.

It is found in the cytoplasm. It catalyses the reaction 4-maleylacetoacetate = 4-fumarylacetoacetate. The catalysed reaction is RX + glutathione = an S-substituted glutathione + a halide anion + H(+). It participates in amino-acid degradation; L-phenylalanine degradation; acetoacetate and fumarate from L-phenylalanine: step 5/6. In terms of biological role, catalyzes the glutathione dependent oxygenation of dichloroacetic acid to glyoxylic acid in vitro. Possesses low glutathione thioltransferase activity toward 4-hydroxynonenal (4-HNE). Has no glutathione thioltransferase activity with adrenochrome, phenethyl isothiocyanate (PEITC), 5-hydroperoxyeicosatetraenoic acid ((5S)-HpETE), prostaglandin A2 (PGA2) or 2-hydroxyethyldisulfide (HED). This is Probable maleylacetoacetate isomerase 1 (GstZ1) from Drosophila melanogaster (Fruit fly).